A 533-amino-acid chain; its full sequence is Quinate permease (533 aa).

Over 1–21 (MSILALVEDRPTPREVYNWRV) the chain is Cytoplasmic. Residues 22 to 42 (YLLAAVASFTSCMIGYDSAFI) traverse the membrane as a helical segment. The Extracellular segment spans residues 43-67 (GTTLSLQSFQNEFNWESLNTDLISA). Residues 68 to 88 (NIVSLYQAGAFFGALFAYPIG) traverse the membrane as a helical segment. The Cytoplasmic portion of the chain corresponds to 89–94 (HFWGRR). The chain crosses the membrane as a helical span at residues 95–115 (WGLMFSALIFFLGAGMMLGAN). Residues 116–127 (GDRGLGLIYGGR) are Extracellular-facing. A helical membrane pass occupies residues 128 to 148 (VLAGIGVGAGSNICPIYISEM). Over 149-156 (APPAIRGR) the chain is Cytoplasmic. Residues 157-177 (LVGVYELGWQIGGVVGFWINY) traverse the membrane as a helical segment. At 178 to 191 (GVDETLAPSHKQWI) the chain is on the extracellular side. The helical transmembrane segment at 192–212 (IPFAVQLIPAGLLIIGALLIR) threads the bilayer. Over 213–282 (ESPRWLFLRG…AWTNKRILYR (70 aa)) the chain is Cytoplasmic. A helical transmembrane segment spans residues 283 to 303 (LFLGSMLFLWQNGSGINAINY). At 304 to 324 (YSPRVFKSIGVSGGNTSLLTT) the chain is on the extracellular side. Residues 325 to 346 (GIFGVVKAVITFVWLLYLIDHF) traverse the membrane as a helical segment. The Cytoplasmic segment spans residues 347 to 349 (GRR). The helical transmembrane segment at 350–370 (NLLLVGAAGGSVCLWIVGGYI) threads the bilayer. At 371 to 385 (KIAKPENNPEGTQLD) the chain is on the extracellular side. The chain crosses the membrane as a helical span at residues 386-406 (SGGIAAIFFFYLWTAFYTPSW). The Cytoplasmic portion of the chain corresponds to 407 to 431 (NGTPWVINSEMFDPTVRSLAQACAA). The chain crosses the membrane as a helical span at residues 432-452 (ASNWLWNFLISRFTPQMFTSM). Over 453–454 (GY) the chain is Extracellular. A helical transmembrane segment spans residues 455–475 (GVYFFFASLMILSIVFVFFLI). Over 476 to 533 (PETKGVPLESMETLFDKKPVWHAHSQLIRELRENEEAFRADMGASGKGGVTKEYVEEA) the chain is Cytoplasmic.

Belongs to the major facilitator superfamily. Sugar transporter (TC 2.A.1.1) family. Interacts with creB. Ubiquitinated. Deubiquitinated by creB, probably to control its activity or amount.

It localises to the cell membrane. Its function is as follows. Integral membrane transporter that imports quinic acid to be catabolized as a carbon source. The protein is Quinate permease (qutD) of Emericella nidulans (strain FGSC A4 / ATCC 38163 / CBS 112.46 / NRRL 194 / M139) (Aspergillus nidulans).